Reading from the N-terminus, the 460-residue chain is Pyruvate dehydrogenase E1 component subunit beta (460 aa).

The region spanning 2–78 is the Lipoyl-binding domain; that stretch reads PVEILMPALS…KVNTPIAVLL (77 aa). Lysine 43 bears the N6-lipoyllysine mark. The segment at 91 to 131 is disordered; it reads KTEAPKAETPKPAAAEAPAASAAPVAAQPKADVPSDPAIPA. Over residues 100 to 121 the composition is skewed to low complexity; it reads PKPAAAEAPAASAAPVAAQPKA. Residue glutamate 194 coordinates thiamine diphosphate.

In terms of assembly, heterodimer of an alpha and a beta chain. (R)-lipoate serves as cofactor. The cofactor is thiamine diphosphate.

It carries out the reaction N(6)-[(R)-lipoyl]-L-lysyl-[protein] + pyruvate + H(+) = N(6)-[(R)-S(8)-acetyldihydrolipoyl]-L-lysyl-[protein] + CO2. Functionally, the pyruvate dehydrogenase complex catalyzes the overall conversion of pyruvate to acetyl-CoA and CO(2). It contains multiple copies of three enzymatic components: pyruvate dehydrogenase (E1), dihydrolipoamide acetyltransferase (E2) and lipoamide dehydrogenase (E3). The chain is Pyruvate dehydrogenase E1 component subunit beta (pdhB) from Rhizobium meliloti (strain 1021) (Ensifer meliloti).